The sequence spans 119 residues: Large ribosomal subunit protein uL14c (119 aa).

Belongs to the universal ribosomal protein uL14 family. In terms of assembly, part of the 50S ribosomal subunit.

The protein resides in the plastid. It is found in the chloroplast. Binds to 23S rRNA. This Ostreococcus tauri protein is Large ribosomal subunit protein uL14c.